We begin with the raw amino-acid sequence, 347 residues long: Probable dual-specificity RNA methyltransferase RlmN (347 aa).

Glu-94 (proton acceptor) is an active-site residue. The Radical SAM core domain maps to 100–319 (YPSRTIACIS…LDTLVKNGID (220 aa)). A disulfide bridge connects residues Cys-107 and Cys-334. [4Fe-4S] cluster is bound by residues Cys-114, Cys-118, and Cys-121. S-adenosyl-L-methionine contacts are provided by residues 161-162 (GE), Ser-193, 216-218 (SLH), and Asn-292. Catalysis depends on Cys-334, which acts as the S-methylcysteine intermediate.

It belongs to the radical SAM superfamily. RlmN family. The cofactor is [4Fe-4S] cluster.

Its subcellular location is the cytoplasm. It catalyses the reaction adenosine(2503) in 23S rRNA + 2 reduced [2Fe-2S]-[ferredoxin] + 2 S-adenosyl-L-methionine = 2-methyladenosine(2503) in 23S rRNA + 5'-deoxyadenosine + L-methionine + 2 oxidized [2Fe-2S]-[ferredoxin] + S-adenosyl-L-homocysteine. It carries out the reaction adenosine(37) in tRNA + 2 reduced [2Fe-2S]-[ferredoxin] + 2 S-adenosyl-L-methionine = 2-methyladenosine(37) in tRNA + 5'-deoxyadenosine + L-methionine + 2 oxidized [2Fe-2S]-[ferredoxin] + S-adenosyl-L-homocysteine. In terms of biological role, specifically methylates position 2 of adenine 2503 in 23S rRNA and position 2 of adenine 37 in tRNAs. The chain is Probable dual-specificity RNA methyltransferase RlmN from Petrotoga mobilis (strain DSM 10674 / SJ95).